Reading from the N-terminus, the 76-residue chain is Protein sigN132 (76 aa).

Residues 1-13 (MLFESISTLSNLK) show a composition bias toward polar residues. A disordered region spans residues 1–33 (MLFESISTLSNLKSASKSSMIASTGSTSSKSSN). Low complexity predominate over residues 14-33 (SASKSSMIASTGSTSSKSSN).

This is Protein sigN132 from Dictyostelium discoideum (Social amoeba).